The primary structure comprises 149 residues: Calmodulin (149 aa).

Alanine 2 carries the post-translational modification N-acetylalanine. EF-hand domains lie at 8–43 (EQIA…LGQN), 44–79 (PTEA…KMKD), 81–116 (DSEE…LGEK), and 117–149 (LTDE…MMAK). Ca(2+) contacts are provided by aspartate 21, aspartate 23, aspartate 25, cysteine 27, glutamate 32, aspartate 57, aspartate 59, asparagine 61, threonine 63, glutamate 68, aspartate 94, aspartate 96, aspartate 98, and glutamate 105. Lysine 116 bears the N6,N6,N6-trimethyllysine mark. Residues aspartate 130, aspartate 132, aspartate 134, glutamine 136, and glutamate 141 each contribute to the Ca(2+) site.

It belongs to the calmodulin family.

Calmodulin mediates the control of a large number of enzymes, ion channels and other proteins by Ca(2+). Among the enzymes to be stimulated by the calmodulin-Ca(2+) complex are a number of protein kinases and phosphatases. The polypeptide is Calmodulin (Triticum aestivum (Wheat)).